The sequence spans 332 residues: Ketol-acid reductoisomerase (NADP(+)) (332 aa).

The KARI N-terminal Rossmann domain maps to A2–T182. NADP(+)-binding positions include Y25–Q28, S51, S53, and D83–Q86. Residue H108 is part of the active site. G134 contributes to the NADP(+) binding site. The KARI C-terminal knotted domain maps to T183–L327. Mg(2+) contacts are provided by D191, E195, E227, and E231. Residue S252 participates in substrate binding.

It belongs to the ketol-acid reductoisomerase family. Requires Mg(2+) as cofactor.

The catalysed reaction is (2R)-2,3-dihydroxy-3-methylbutanoate + NADP(+) = (2S)-2-acetolactate + NADPH + H(+). It catalyses the reaction (2R,3R)-2,3-dihydroxy-3-methylpentanoate + NADP(+) = (S)-2-ethyl-2-hydroxy-3-oxobutanoate + NADPH + H(+). It functions in the pathway amino-acid biosynthesis; L-isoleucine biosynthesis; L-isoleucine from 2-oxobutanoate: step 2/4. It participates in amino-acid biosynthesis; L-valine biosynthesis; L-valine from pyruvate: step 2/4. Its function is as follows. Involved in the biosynthesis of branched-chain amino acids (BCAA). Catalyzes an alkyl-migration followed by a ketol-acid reduction of (S)-2-acetolactate (S2AL) to yield (R)-2,3-dihydroxy-isovalerate. In the isomerase reaction, S2AL is rearranged via a Mg-dependent methyl migration to produce 3-hydroxy-3-methyl-2-ketobutyrate (HMKB). In the reductase reaction, this 2-ketoacid undergoes a metal-dependent reduction by NADPH to yield (R)-2,3-dihydroxy-isovalerate. The sequence is that of Ketol-acid reductoisomerase (NADP(+)) from Sulfurihydrogenibium sp. (strain YO3AOP1).